The chain runs to 226 residues: 2-amino-5-formylamino-6-ribosylaminopyrimidin-4(3H)-one 5'-monophosphate deformylase (226 aa).

Fe cation-binding residues include Glu-29, His-31, Asp-40, and His-108.

Belongs to the creatininase superfamily. FAPy deformylase family. In terms of assembly, homodimer. The cofactor is Fe(2+). It depends on Zn(2+) as a cofactor.

It carries out the reaction 2-amino-5-formylamino-6-(5-phospho-D-ribosylamino)pyrimidin-4(3H)-one + H2O = 2,5-diamino-6-(1-D-ribosylamino)pyrimidin-4(3H)-one 5'-phosphate + formate + H(+). It functions in the pathway cofactor biosynthesis; coenzyme F420 biosynthesis. It participates in cofactor biosynthesis; riboflavin biosynthesis. Its function is as follows. Catalyzes the hydrolysis of the formamide of 2-amino-5-formylamino-6-ribosylamino-4(3H)-pyrimidinone 5'-monophosphate (FAPy) to form 2,5-diamino-6-ribosylamino-4(3H)-pyrimidinone 5'-phosphate (APy). In Methanocaldococcus vulcanius (strain ATCC 700851 / DSM 12094 / M7) (Methanococcus vulcanius), this protein is 2-amino-5-formylamino-6-ribosylaminopyrimidin-4(3H)-one 5'-monophosphate deformylase.